The chain runs to 209 residues: Small ribosomal subunit protein uS4 (209 aa).

Positions 99–160 constitute an S4 RNA-binding domain; that stretch reads RRLDNVVYRL…GSKEMTLLGQ (62 aa).

The protein belongs to the universal ribosomal protein uS4 family. In terms of assembly, part of the 30S ribosomal subunit. Contacts protein S5. The interaction surface between S4 and S5 is involved in control of translational fidelity.

In terms of biological role, one of the primary rRNA binding proteins, it binds directly to 16S rRNA where it nucleates assembly of the body of the 30S subunit. Functionally, with S5 and S12 plays an important role in translational accuracy. This chain is Small ribosomal subunit protein uS4, found in Koribacter versatilis (strain Ellin345).